Consider the following 249-residue polypeptide: Ribonuclease PH (249 aa).

Residues R90 and 128-130 (GTR) each bind phosphate.

Belongs to the RNase PH family. In terms of assembly, homohexameric ring arranged as a trimer of dimers.

It carries out the reaction tRNA(n+1) + phosphate = tRNA(n) + a ribonucleoside 5'-diphosphate. In terms of biological role, phosphorolytic 3'-5' exoribonuclease that plays an important role in tRNA 3'-end maturation. Removes nucleotide residues following the 3'-CCA terminus of tRNAs; can also add nucleotides to the ends of RNA molecules by using nucleoside diphosphates as substrates, but this may not be physiologically important. Probably plays a role in initiation of 16S rRNA degradation (leading to ribosome degradation) during starvation. The chain is Ribonuclease PH from Parasynechococcus marenigrum (strain WH8102).